Reading from the N-terminus, the 463-residue chain is Autophagy-related protein 36 (463 aa).

The RING-type; atypical zinc finger occupies 5-45 (CSICLEVLVDKEAFTEPCLHYYHNECIKEWTKRANTCPKCR). The PHD-type zinc finger occupies 85–131 (TNLCALCEDPSTSLIYCESCGGSFHFNCIGIGDELDSEWCCPLCGMF). The segment covering 229 to 242 (TQNSQSSEFSTENN) has biased composition (polar residues). The interval 229 to 281 (TQNSQSSEFSTENNVVPLKNTHELGRKLKKPRRASGIKKNVVERSSSHQSTQI) is disordered. Basic residues predominate over residues 255 to 264 (KLKKPRRASG).

As to quaternary structure, interacts with ATG28.

In terms of biological role, micropexophagy-specific protein required for efficient micropexophagic apparatus (MIPA) formation but not for general autophagy. This Komagataella phaffii (strain GS115 / ATCC 20864) (Yeast) protein is Autophagy-related protein 36 (ATG35).